A 546-amino-acid chain; its full sequence is Elongator complex protein 3 (546 aa).

Residues 81 to 371 (RTASGIAVVA…YRVQRDIPMP (291 aa)) enclose the Radical SAM core domain. Positions 98, 108, and 111 each coordinate [4Fe-4S] cluster. Residues lysine 163, 473-476 (ELHV), 496-498 (FGM), and tyrosine 529 each bind acetyl-CoA. One can recognise an N-acetyltransferase domain in the interval 395 to 546 (TQCRDVRTRE…EGPYMVKRLQ (152 aa)).

This sequence belongs to the ELP3 family. In terms of assembly, component of the elongator complex. It depends on [4Fe-4S] cluster as a cofactor.

The protein localises to the cytoplasm. The protein resides in the nucleus. The catalysed reaction is uridine(34) in tRNA + acetyl-CoA + S-adenosyl-L-methionine + H2O = 5-(carboxymethyl)uridine(34) in tRNA + 5'-deoxyadenosine + L-methionine + CoA + 2 H(+). It participates in tRNA modification; 5-methoxycarbonylmethyl-2-thiouridine-tRNA biosynthesis. Functionally, catalytic tRNA acetyltransferase subunit of the elongator complex which is required for multiple tRNA modifications, including mcm5U (5-methoxycarbonylmethyl uridine), mcm5s2U (5-methoxycarbonylmethyl-2-thiouridine), and ncm5U (5-carbamoylmethyl uridine). In the elongator complex, acts as a tRNA uridine(34) acetyltransferase by mediating formation of carboxymethyluridine in the wobble base at position 34 in tRNAs. The polypeptide is Elongator complex protein 3 (Gallus gallus (Chicken)).